Reading from the N-terminus, the 104-residue chain is Salivary protein FS145 (104 aa).

Positions 1–18 (MKLFAVFLLFCLVNQIYC) are cleaved as a signal peptide. 4 disulfides stabilise this stretch: cysteine 32–cysteine 80, cysteine 62–cysteine 89, cysteine 72–cysteine 100, and cysteine 76–cysteine 102. Positions 92–94 (WGD) match the Putative integrin attachment site; atypical (WGD) motif.

Interacts with host integrin alpha-V/beta-3 (ITGAV:ITGB3).

Its subcellular location is the secreted. In terms of biological role, inhibits proliferation, adhesion and migration of host cells as well as host angiogenesis by blocking host integrin alpha-V/beta-3 (ITGAV:ITGB3). This chain is Salivary protein FS145, found in Xenopsylla cheopis (Oriental rat flea).